Reading from the N-terminus, the 336-residue chain is Dihydroorotate dehydrogenase (quinone) (336 aa).

FMN-binding positions include 62-66 and Thr86; that span reads AGLDK. Residue Lys66 coordinates substrate. Position 111 to 115 (111 to 115) interacts with substrate; that stretch reads NRMGF. FMN-binding residues include Asn139 and Asn172. Substrate is bound at residue Asn172. The Nucleophile role is filled by Ser175. Substrate is bound at residue Asn177. Positions 217 and 245 each coordinate FMN. 246-247 is a binding site for substrate; that stretch reads NT. FMN is bound by residues Gly268, Gly297, and 318–319; that span reads YS.

This sequence belongs to the dihydroorotate dehydrogenase family. Type 2 subfamily. As to quaternary structure, monomer. The cofactor is FMN.

Its subcellular location is the cell membrane. The enzyme catalyses (S)-dihydroorotate + a quinone = orotate + a quinol. The protein operates within pyrimidine metabolism; UMP biosynthesis via de novo pathway; orotate from (S)-dihydroorotate (quinone route): step 1/1. In terms of biological role, catalyzes the conversion of dihydroorotate to orotate with quinone as electron acceptor. This Citrobacter koseri (strain ATCC BAA-895 / CDC 4225-83 / SGSC4696) protein is Dihydroorotate dehydrogenase (quinone).